The chain runs to 177 residues: Large ribosomal subunit protein uL6 (177 aa).

The protein belongs to the universal ribosomal protein uL6 family. As to quaternary structure, part of the 50S ribosomal subunit.

Functionally, this protein binds to the 23S rRNA, and is important in its secondary structure. It is located near the subunit interface in the base of the L7/L12 stalk, and near the tRNA binding site of the peptidyltransferase center. In Xanthobacter autotrophicus (strain ATCC BAA-1158 / Py2), this protein is Large ribosomal subunit protein uL6.